The chain runs to 1387 residues: Collagen-like protein 6 (1387 aa).

N6 carries N-linked (GlcNAc...) asparagine; by host glycosylation. Collagen-like domains lie at 95 to 154, 161 to 220, 266 to 325, 344 to 403, 450 to 508, and 512 to 751; these read GNNG…KGDI, GDKG…KGDN, GEKG…KGEM, GSKG…KGEK, IKGD…KGDI, and GEKG…SGSS. 3 disordered regions span residues 98–219, 268–422, and 454–753; these read GNNG…DKGD, KGEI…QNQG, and KGEK…SSCQ. Composition is skewed to basic and acidic residues over residues 114 to 181, 189 to 199, 207 to 219, 268 to 340, 364 to 382, 390 to 405, 454 to 535, and 544 to 747; these read IKGD…KGSK, SKGDNGDKGSK, SKGDKGNKGDKGD, KGEI…DGIK, KGDRGDKGDKGSKGDKGDN, SKGDKGDNGIKGEKGE, KGEK…KGDI, and KGEK…DKGE. N794, N814, N819, N826, N846, N886, N894, N969, N1032, N1077, N1123, N1200, N1224, N1232, and N1233 each carry an N-linked (GlcNAc...) asparagine; by host glycan.

Post-translationally, may be hydroxylated on lysine by the viral-encoded procollagen-lysine,2-oxoglutarate 5-dioxygenase.

It localises to the virion. Functionally, may participate in the formation of a layer of cross-linked glycosylated fibrils at the viral surface thus giving it a hairy-like appearance. The polypeptide is Collagen-like protein 6 (Acanthamoeba polyphaga mimivirus (APMV)).